We begin with the raw amino-acid sequence, 340 residues long: Diacylglycerol acyltransferase/mycolyltransferase Ag85C (340 aa).

The N-terminal stretch at 1 to 45 (MTFFEQVRRLRSAATTLPRRLAIAAMGAVLVYGLVGTFGGPATAG) is a signal peptide. 86–87 (LR) contacts substrate. The fibronectin-binding stretch occupies residues 102–112 (FEEYYQSGLSV). Residues Ser170 and Asn198 each coordinate substrate. Ser170 acts as the Nucleophile in catalysis. The active site involves Glu274. Substrate-binding positions include 276–279 (LTLR) and 306–308 (HSW). Residue His306 is part of the active site.

This sequence belongs to the mycobacterial A85 antigen family. Homodimer.

The protein localises to the secreted. The catalysed reaction is an acyl-CoA + a 1,2-diacyl-sn-glycerol = a triacyl-sn-glycerol + CoA. It catalyses the reaction 2 alpha,alpha'-trehalose 6-mycolate = alpha,alpha'-trehalose 6,6'-bismycolate + alpha,alpha-trehalose. In terms of biological role, the antigen 85 proteins (FbpA, FbpB, FbpC) are responsible for the high affinity of mycobacteria to fibronectin, a large adhesive glycoprotein, which facilitates the attachment of M.tuberculosis to murine alveolar macrophages (AMs). They also help to maintain the integrity of the cell wall by catalyzing the transfer of mycolic acids to cell wall arabinogalactan and through the synthesis of alpha,alpha-trehalose dimycolate (TDM, cord factor). They catalyze the transfer of a mycoloyl residue from one molecule of alpha,alpha-trehalose monomycolate (TMM) to another TMM, leading to the formation of TDM. In Mycobacterium bovis (strain ATCC BAA-935 / AF2122/97), this protein is Diacylglycerol acyltransferase/mycolyltransferase Ag85C (fbpC).